The primary structure comprises 26 residues: GIGAILKVLSTGLPALISWIKRKRQE.

An N-formylglycine; partial modification is found at G1. At E26 the chain carries Glutamic acid 1-amide.

It belongs to the melittin family. Monomer (in solution and for integration into membranes), homotetramer (in solution and potentially as a toroidal pore in membranes), and potenially homomultimer (as a toroidal pore in membranes). Expressed by the venom gland.

Its subcellular location is the secreted. The protein localises to the target cell membrane. Functionally, main toxin of bee venom with strong hemolytic activity and antimicrobial activity. It has enhancing effects on bee venom phospholipase A2 activity. This amphipathic toxin binds to negatively charged membrane surface and forms pore by inserting into lipid bilayers inducing the leakage of ions and molecules and the enhancement of permeability that ultimately leads to cell lysis. It acts as a voltage-gated pore with higher selectivity for anions over cations. The ion conductance has been shown to be voltage-dependent. Self-association of melittin in membranes is promoted by high ionic strength, but not by the presence of negatively charged lipids. In vivo, intradermal injection into healthy human volunteers produce sharp pain sensation and an inflammatory response. It produces pain by activating primary nociceptor cells directly and indirectly due to its ability to activate plasma membrane phospholipase A2 and its pore-forming activity. The sequence is that of Melittin (MELT) from Apis dorsata (Giant honeybee).